The sequence spans 319 residues: 4-hydroxy-3-methylbut-2-enyl diphosphate reductase (319 aa).

Cysteine 18 serves as a coordination point for [4Fe-4S] cluster. Histidine 47 and histidine 81 together coordinate (2E)-4-hydroxy-3-methylbut-2-enyl diphosphate. Histidine 47 and histidine 81 together coordinate dimethylallyl diphosphate. Isopentenyl diphosphate contacts are provided by histidine 47 and histidine 81. Cysteine 103 lines the [4Fe-4S] cluster pocket. Histidine 131 serves as a coordination point for (2E)-4-hydroxy-3-methylbut-2-enyl diphosphate. Histidine 131 provides a ligand contact to dimethylallyl diphosphate. Isopentenyl diphosphate is bound at residue histidine 131. The active-site Proton donor is the glutamate 133. (2E)-4-hydroxy-3-methylbut-2-enyl diphosphate is bound at residue threonine 172. Cysteine 202 contacts [4Fe-4S] cluster. Residues serine 230, serine 231, asparagine 232, and serine 275 each coordinate (2E)-4-hydroxy-3-methylbut-2-enyl diphosphate. Dimethylallyl diphosphate-binding residues include serine 230, serine 231, asparagine 232, and serine 275. 4 residues coordinate isopentenyl diphosphate: serine 230, serine 231, asparagine 232, and serine 275.

Belongs to the IspH family. [4Fe-4S] cluster is required as a cofactor.

The enzyme catalyses isopentenyl diphosphate + 2 oxidized [2Fe-2S]-[ferredoxin] + H2O = (2E)-4-hydroxy-3-methylbut-2-enyl diphosphate + 2 reduced [2Fe-2S]-[ferredoxin] + 2 H(+). It catalyses the reaction dimethylallyl diphosphate + 2 oxidized [2Fe-2S]-[ferredoxin] + H2O = (2E)-4-hydroxy-3-methylbut-2-enyl diphosphate + 2 reduced [2Fe-2S]-[ferredoxin] + 2 H(+). Its pathway is isoprenoid biosynthesis; dimethylallyl diphosphate biosynthesis; dimethylallyl diphosphate from (2E)-4-hydroxy-3-methylbutenyl diphosphate: step 1/1. It functions in the pathway isoprenoid biosynthesis; isopentenyl diphosphate biosynthesis via DXP pathway; isopentenyl diphosphate from 1-deoxy-D-xylulose 5-phosphate: step 6/6. Its function is as follows. Catalyzes the conversion of 1-hydroxy-2-methyl-2-(E)-butenyl 4-diphosphate (HMBPP) into a mixture of isopentenyl diphosphate (IPP) and dimethylallyl diphosphate (DMAPP). Acts in the terminal step of the DOXP/MEP pathway for isoprenoid precursor biosynthesis. The protein is 4-hydroxy-3-methylbut-2-enyl diphosphate reductase of Beijerinckia indica subsp. indica (strain ATCC 9039 / DSM 1715 / NCIMB 8712).